The following is an 84-amino-acid chain: Small ribosomal subunit protein uS17 (84 aa).

The protein belongs to the universal ribosomal protein uS17 family. In terms of assembly, part of the 30S ribosomal subunit.

In terms of biological role, one of the primary rRNA binding proteins, it binds specifically to the 5'-end of 16S ribosomal RNA. This is Small ribosomal subunit protein uS17 from Clostridium botulinum (strain Eklund 17B / Type B).